The following is a 472-amino-acid chain: Aspartyl/glutamyl-tRNA(Asn/Gln) amidotransferase subunit B (472 aa).

Belongs to the GatB/GatE family. GatB subfamily. As to quaternary structure, heterotrimer of A, B and C subunits.

The catalysed reaction is L-glutamyl-tRNA(Gln) + L-glutamine + ATP + H2O = L-glutaminyl-tRNA(Gln) + L-glutamate + ADP + phosphate + H(+). The enzyme catalyses L-aspartyl-tRNA(Asn) + L-glutamine + ATP + H2O = L-asparaginyl-tRNA(Asn) + L-glutamate + ADP + phosphate + 2 H(+). In terms of biological role, allows the formation of correctly charged Asn-tRNA(Asn) or Gln-tRNA(Gln) through the transamidation of misacylated Asp-tRNA(Asn) or Glu-tRNA(Gln) in organisms which lack either or both of asparaginyl-tRNA or glutaminyl-tRNA synthetases. The reaction takes place in the presence of glutamine and ATP through an activated phospho-Asp-tRNA(Asn) or phospho-Glu-tRNA(Gln). The chain is Aspartyl/glutamyl-tRNA(Asn/Gln) amidotransferase subunit B from Campylobacter jejuni (strain RM1221).